Reading from the N-terminus, the 684-residue chain is Fidgetin-like protein 2 (684 aa).

The segment covering 27–41 (PEQHLDVSSTTSSPA) has biased composition (polar residues). 3 disordered regions span residues 27 to 48 (PEQHLDVSSTTSSPAHKSELYS), 99 to 179 (PGAF…PHSS), and 292 to 403 (LDEE…SDPM). Over residues 160 to 179 (SNLSDSGYSGSSSCSGPHSS) the composition is skewed to low complexity. Residue Ala431 coordinates ATP.

The protein belongs to the AAA ATPase family. Mg(2+) is required as a cofactor. Highly expressed in vascular endothelial cells and neuronal cells.

The protein localises to the cytoplasm. It localises to the cell cortex. It carries out the reaction ATP + H2O = ADP + phosphate + H(+). Functionally, microtubule-severing enzyme that negatively regulates cell migration and wound healing. In migrating cells, targets dynamic microtubules (MTs) at the leading edge and severs them, thereby suppressing motility. Negative regulator of axon regeneration that suppresses axonal growth by selectively severing dynamic MTs in the distal axon shaft and growth cone. Contributes to proper cell branching during endothelial and neuronal development. The protein is Fidgetin-like protein 2 (fignl2) of Danio rerio (Zebrafish).